Consider the following 274-residue polypeptide: Large ribosomal subunit protein uL2cz/uL2cy (274 aa).

2 disordered regions span residues 1–23 (MAIH…SQVK) and 223–274 (MNPV…RRSK). Positions 7-23 (KTSTPSTRNGTVGSQVK) are enriched in polar residues.

Belongs to the universal ribosomal protein uL2 family. As to quaternary structure, part of the 50S ribosomal subunit.

Its subcellular location is the plastid. It localises to the chloroplast. The sequence is that of Large ribosomal subunit protein uL2cz/uL2cy (rpl2-A) from Nandina domestica (Heavenly bamboo).